The primary structure comprises 119 residues: DNA-binding protein inhibitor ID-3 (119 aa).

The region spanning 28–80 (RGKGPAAEEPLSLLDDMNHCYSRLRELVPGVPRGTQLSQVEILQRVIDYILDL) is the bHLH domain.

In terms of assembly, homodimer, and heterodimer with other HLH proteins. Interacts with COPS5 and COPS7A. Interacts with IFI204. Interacts with GATA4 and NKX2-5. Interacts with ANKRD2; both proteins cooperate in myoblast differentiation. Interacts with CLOCK and BMAL1. In terms of tissue distribution, expressed abundantly in lung, kidney and adrenal gland, but not in adult brain.

It is found in the nucleus. In terms of biological role, transcriptional regulator (lacking a basic DNA binding domain) which negatively regulates the basic helix-loop-helix (bHLH) transcription factors by forming heterodimers and inhibiting their DNA binding and transcriptional activity. Implicated in regulating a variety of cellular processes, including cellular growth, senescence, differentiation, apoptosis, angiogenesis, and neoplastic transformation. Involved in myogenesis by inhibiting skeletal muscle and cardiac myocyte differentiation and promoting muscle precursor cells proliferation. Inhibits the binding of E2A-containing protein complexes to muscle creatine kinase E-box enhancer. Regulates the circadian clock by repressing the transcriptional activator activity of the CLOCK-BMAL1 heterodimer. This is DNA-binding protein inhibitor ID-3 (ID3) from Homo sapiens (Human).